A 242-amino-acid chain; its full sequence is ATP synthase subunit a (242 aa).

6 helical membrane-spanning segments follow: residues S29–S49, F84–I104, I114–V134, F140–I160, V189–M209, and V210–L230.

The protein belongs to the ATPase A chain family. As to quaternary structure, F-type ATPases have 2 components, CF(1) - the catalytic core - and CF(0) - the membrane proton channel. CF(1) has five subunits: alpha(3), beta(3), gamma(1), delta(1), epsilon(1). CF(0) has three main subunits: a(1), b(2) and c(9-12). The alpha and beta chains form an alternating ring which encloses part of the gamma chain. CF(1) is attached to CF(0) by a central stalk formed by the gamma and epsilon chains, while a peripheral stalk is formed by the delta and b chains.

Its subcellular location is the cell inner membrane. Key component of the proton channel; it plays a direct role in the translocation of protons across the membrane. The protein is ATP synthase subunit a of Rickettsia bellii (strain RML369-C).